The sequence spans 1181 residues: Putative primase (1181 aa).

Positions 1141–1181 (RSHSTMVEHDMDDDESTNKKQELEEEDEECIDIDEYNNERF) are disordered. The span at 1163-1181 (LEEEDEECIDIDEYNNERF) shows a compositional bias: acidic residues.

This sequence belongs to the eukaryotic-type primase small subunit family.

In terms of biological role, synthesizes small RNA primers for the Okazaki fragments on both template strands at replication forks during viral DNA synthesis. This is Putative primase from Magallana gigas (Pacific oyster).